We begin with the raw amino-acid sequence, 115 residues long: Thiosulfate:glutathione sulfurtransferase (115 aa).

Residues 17–115 (ASGRARLFDV…AYREWLEKES (99 aa)) form the Rhodanese domain. Catalysis depends on C79, which acts as the Cysteine persulfide intermediate.

Highly expressed in kidney, liver and skeletal muscle. Lower levels of expression in heart, colon, thymus, spleen, placenta and lung. Weakly expressed in brain, small intestine and peripheral blood leukocytes. Expressed at high levels in the breast carcinoma cell lines MCF-7 and MDA-MB-468 and at a lower level in the breast carcinoma cell line MDA-MB-231, the colon carcinoma call line LoVo and the lung carcinoma cell line A-549. No expression in the cell lines EFO-27 and HeLa, or the normal breast tissue cell lines MCF-10A and H184A1. Detected in invasive ductal carcinoma, but not in the adjacent tissues.

The protein resides in the cytoplasm. The protein localises to the perinuclear region. It catalyses the reaction thiosulfate + glutathione = S-sulfanylglutathione + sulfite + H(+). It carries out the reaction thiosulfate + 2 glutathione = glutathione disulfide + hydrogen sulfide + sulfite + 2 H(+). With respect to regulation, GSS(-) is a potent inhibitor of TSTD1, since the presence of the sulfur dioxygenase (SDO) strongly increases the TSTD1 catalytic activity. In terms of biological role, thiosulfate:glutathione sulfurtransferase (TST) required to produce S-sulfanylglutathione (GSS(-)), a central intermediate in hydrogen sulfide metabolism. Provides the link between the first step in mammalian H(2)S metabolism performed by the sulfide:quinone oxidoreductase (SQOR) which catalyzes the conversion of H(2)S to thiosulfate, and the sulfur dioxygenase (SDO) which uses GSS(-) as substrate. The thermodynamic coupling of the irreversible SDO and reversible TST reactions provides a model for the physiologically relevant reaction with thiosulfate as the sulfane donor. GSS(-) spontaneously reacts with glutathione to form glutathione disulfide. The protein is Thiosulfate:glutathione sulfurtransferase (TSTD1) of Homo sapiens (Human).